The following is a 364-amino-acid chain: tRNA (adenine(58)-N(1))-methyltransferase catalytic subunit trm61 (364 aa).

Residues 114–116 (SAS), Glu135, Arg140, 167–168 (DV), and Asp186 contribute to the S-adenosyl-L-methionine site. The interval 280–309 (EQNLSSDAKVEDQDNDSMLGENKSSVSTET) is disordered.

Belongs to the class I-like SAM-binding methyltransferase superfamily. TRM61 family. In terms of assembly, heterotetramer; composed of two copies of TRM6 and two copies of TRM61.

The protein localises to the nucleus. It catalyses the reaction adenosine(58) in tRNA + S-adenosyl-L-methionine = N(1)-methyladenosine(58) in tRNA + S-adenosyl-L-homocysteine + H(+). Its function is as follows. Catalytic subunit of tRNA (adenine-N(1)-)-methyltransferase, which catalyzes the formation of N(1)-methyladenine at position 58 (m1A58) in initiator methionyl-tRNA. The chain is tRNA (adenine(58)-N(1))-methyltransferase catalytic subunit trm61 (cpd1) from Schizosaccharomyces pombe (strain 972 / ATCC 24843) (Fission yeast).